The primary structure comprises 541 residues: Probable inorganic phosphate transporter 1-8 (541 aa).

The Cytoplasmic portion of the chain corresponds to 1–28 (MARQEQQQHLQVLSALDAAKTQWYHFTA). Residues 29–49 (IVVAGMGFFTDAYDLFCISLV) traverse the membrane as a helical segment. Over 50 to 74 (TKLLGRIYYTDLAKENPGSLPPNVA) the chain is Extracellular. Residues 75-95 (AAVNGVAFCGTLAGQLFFGWL) form a helical membrane-spanning segment. At 96 to 102 (GDKLGRK) the chain is on the cytoplasmic side. The chain crosses the membrane as a helical span at residues 103 to 123 (SVYGMTLLMMVICSIASGLSF). Topologically, residues 124 to 126 (SHT) are extracellular. The chain crosses the membrane as a helical span at residues 127-147 (PTSVMATLCFFRFWLGFGIGG). The Cytoplasmic portion of the chain corresponds to 148–168 (DYPLSATIMSEYANKKTRGAF). A helical membrane pass occupies residues 169–189 (IAAVFAMQGFGILAGGIVTLI). The Extracellular portion of the chain corresponds to 190–215 (ISSAFRAGFPAPAYQDDRAGSTVRQA). A helical transmembrane segment spans residues 216-236 (DYVWRIILMLGAMPALLTYYW). At 237–297 (RMKMPETARY…GLFSRQFARR (61 aa)) the chain is on the cytoplasmic side. Residues 298-318 (HGLHLVGTATTWFLLDIAFYS) traverse the membrane as a helical segment. The Extracellular segment spans residues 319–353 (QNLFQKDIFTSINWIPKAKTMSALEEVFRIARAQT). A helical membrane pass occupies residues 354 to 374 (LIALCGTVPGYWFTVFLIDIV). Residues 375–376 (GR) are Cytoplasmic-facing. A helical transmembrane segment spans residues 377–397 (FAIQLLGFFMMTVFMLGLAVP). Residues 398 to 404 (YHHWTTK) are Extracellular-facing. A helical transmembrane segment spans residues 405-425 (GNHIGFVVMYAFTFFFANFGP). Residues 426–447 (NSTTFIVPAEIFPARLRSTCHG) are Cytoplasmic-facing. The helical transmembrane segment at 448 to 468 (ISAAAGKAGAIIGSFGFLYAA) threads the bilayer. The Extracellular portion of the chain corresponds to 469–486 (QDPHKPDAGYKPGIGVRN). A helical membrane pass occupies residues 487 to 507 (SLFVLAGCNLLGFICTFLVPE). Over 508–541 (SKGKSLEEMSGEAEDDDDEVAAAGGGAAVRPQTA) the chain is Cytoplasmic. The tract at residues 514–541 (EEMSGEAEDDDDEVAAAGGGAAVRPQTA) is disordered. The segment covering 516–527 (MSGEAEDDDDEV) has biased composition (acidic residues).

This sequence belongs to the major facilitator superfamily. Phosphate:H(+) symporter (TC 2.A.1.9) family.

The protein resides in the membrane. Its function is as follows. High-affinity transporter for external inorganic phosphate. This chain is Probable inorganic phosphate transporter 1-8 (PHT1-8), found in Oryza sativa subsp. japonica (Rice).